Here is a 254-residue protein sequence, read N- to C-terminus: Protein odd-skipped-related 2 (254 aa).

3 consecutive C2H2-type zinc fingers follow at residues 124-146 (FICKYCDRHFTKSYNLLIHERTH), 152-174 (YSCDVCGKAFRRQDHLRDHKYIH), and 180-202 (FKCEICGKGFCQSRTLLVHRATH).

Belongs to the Odd C2H2-type zinc-finger protein family.

Its subcellular location is the nucleus. Its function is as follows. May function as transcription regulator. Required for morphogenesis and function of the digestive tract. This Caenorhabditis elegans protein is Protein odd-skipped-related 2.